Reading from the N-terminus, the 591-residue chain is MCGILAVLGVADVSLAKRSRIIELSRRLRHRGPDWSGIHCYQDCYLAHQRLAIVDPTSGDQPLYNEDKSVVVTVNGEIYNHEELKANLKSHKFQTASDCEVIAHLYEEYGEEFVDMLDGMFAFVLLDTRDKSFIAARDAIGICPLYMGWGLDGSVWFSSEMKALSDDCERFISFPPGHLYSSKTGGLRRWYNPPWFSESIPSTPYNPLLLRQSFEKAIIKRLMTDVPFGVLLSGGLDSSLVASVVSRHLAEAKVAAQWGNKLHTFCIGLKGSPDLRAAKEVADYLGTVHHELHFTVQEGIDALEEVIYHVETYDVTTIRASTPMFLMSRKIKSLGVKMVLSGEGSDEIFGGYLYFHKAPNKKEFHEETCRKIKALHLYDCLRANKSTSAWGVEARVPFLDKNFINVAMDIDPEWKMIKRDLGRIEKWVLRNAFDDEEKPYLPKHILYRQKEQFSDGVGYSWIDGLKDHANEHVSDSMMMNASFVYPENTPVTKEAYYYRTIFEKFFPKNAARLTVPGGPSVACSTAKAVEWDAAWSKNLDPSGRAALGVHDAAYEDTLQKSPASANPVLDNGFGPALGESMVKTVASATAV.

Cys-2 (for GATase activity) is an active-site residue. The Glutamine amidotransferase type-2 domain occupies 2 to 185 (CGILAVLGVA…PGHLYSSKTG (184 aa)). L-glutamine contacts are provided by residues 50–54 (RLAIV), 75–77 (NGE), and Asp-98. The region spanning 193 to 516 (PPWFSESIPS…PKNAARLTVP (324 aa)) is the Asparagine synthetase domain. ATP is bound by residues Leu-231, Ile-267, and 341 to 342 (SG).

In terms of tissue distribution, expressed in companion cells of leaf sheath vascular bundles, and phloem-parenchyma cells, nucellar projections and nucellar epidermis of dorsal vascular bundles of grains.

The enzyme catalyses L-aspartate + L-glutamine + ATP + H2O = L-asparagine + L-glutamate + AMP + diphosphate + H(+). It participates in amino-acid biosynthesis; L-asparagine biosynthesis; L-asparagine from L-aspartate (L-Gln route): step 1/1. Its function is as follows. Essential for nitrogen assimilation, distribution and remobilization within the plant via the phloem. The chain is Asparagine synthetase [glutamine-hydrolyzing] 2 from Oryza sativa subsp. japonica (Rice).